Here is a 119-residue protein sequence, read N- to C-terminus: uncharacterized protein (119 aa).

Positions 55–119 (LSTEPPTPPS…SRLPPRSWTN (65 aa)) are disordered. The span at 81-92 (LSYTRCHSTTYT) shows a compositional bias: polar residues.

This is an uncharacterized protein from Saccharomyces cerevisiae (strain ATCC 204508 / S288c) (Baker's yeast).